Consider the following 94-residue polypeptide: Integration host factor subunit beta (94 aa).

This sequence belongs to the bacterial histone-like protein family. Heterodimer of an alpha and a beta chain.

Functionally, this protein is one of the two subunits of integration host factor, a specific DNA-binding protein that functions in genetic recombination as well as in transcriptional and translational control. The sequence is that of Integration host factor subunit beta from Citrobacter koseri (strain ATCC BAA-895 / CDC 4225-83 / SGSC4696).